Consider the following 475-residue polypeptide: Lipid II flippase MurJ (475 aa).

Residues 1 to 2 (MS) lie on the Cytoplasmic side of the membrane. The chain crosses the membrane as a helical span at residues 3–23 (ILFSSILFSIATFFSRILGLF). At 24-35 (RDVLFAKYFGVS) the chain is on the periplasmic side. The chain crosses the membrane as a helical span at residues 36–56 (YELDAYFIAIMFPFFLRKVFG). Topologically, residues 57-78 (EGAMSSAFVPLYSEKSGEEKDK) are cytoplasmic. The helical transmembrane segment at 79–99 (FLSSVINGFSLIILALVILSY) threads the bilayer. Topologically, residues 100 to 123 (FFPELIINLFGAGSSHETKILAKK) are periplasmic. A helical membrane pass occupies residues 124-144 (LLLITSPSIYFIFLWAISYSI). Topologically, residues 145–150 (LNTNNK) are cytoplasmic. The helical transmembrane segment at 151–171 (FFWPALTPSISNITIIIGTFL) threads the bilayer. Over 172–175 (STKY) the chain is Periplasmic. Residues 176–196 (GIISPTIGFLIGSILMFFSII) traverse the membrane as a helical segment. At 197 to 213 (KSIIKHKYYFTIKHFPH) the chain is on the cytoplasmic side. Residues 214–238 (FLKLFFPTFMTMVVSQINTVVDMNV) form a helical membrane-spanning segment. The Periplasmic portion of the chain corresponds to 239–249 (VSFYDKGSISY). Residues 250 to 271 (LQYASRFYLLPYGLFAVSVSTV) form a helical membrane-spanning segment. At 272–287 (VLSKISNDRKNFNYHL) the chain is on the cytoplasmic side. A helical membrane pass occupies residues 288 to 308 (NDALKTTLFFTIPSMVGLIFL). The Periplasmic segment spans residues 309-332 (STPIIRFFYEHGAFTSKDTLITSK). A helical membrane pass occupies residues 333–353 (ILIAYTLGLPFYGIYSTISRS). Residues 354-362 (YHAIKNTKT) lie on the Cytoplasmic side of the membrane. The chain crosses the membrane as a helical span at residues 363–383 (PFIAATIVSLSNIILDIIFGL). The Periplasmic segment spans residues 384 to 386 (KYG). A helical transmembrane segment spans residues 387 to 407 (PIGVALATSIAGIIGVLYLLF). Topologically, residues 408–416 (SVKTFPIKD) are cytoplasmic. The chain crosses the membrane as a helical span at residues 417 to 437 (FLKISLNSLIMLFVIYLTDFT). Over 438–440 (DNE) the chain is Periplasmic. A helical membrane pass occupies residues 441-461 (FWFLIQILIGILVYLIFSSIF). The Cytoplasmic segment spans residues 462–475 (YRDLIRRFLYARKK).

It belongs to the MurJ/MviN family.

Its subcellular location is the cell inner membrane. It functions in the pathway cell wall biogenesis; peptidoglycan biosynthesis. Its function is as follows. Involved in peptidoglycan biosynthesis. Transports lipid-linked peptidoglycan precursors from the inner to the outer leaflet of the cytoplasmic membrane. The protein is Lipid II flippase MurJ of Thermosipho africanus (strain TCF52B).